Reading from the N-terminus, the 295-residue chain is Pyridoxal 5'-phosphate synthase subunit PdxS (295 aa).

Asp-25 serves as a coordination point for D-ribose 5-phosphate. The active-site Schiff-base intermediate with D-ribose 5-phosphate is Lys-82. D-ribose 5-phosphate is bound at residue Gly-154. D-glyceraldehyde 3-phosphate is bound at residue Arg-166. Residues Gly-215 and 236 to 237 contribute to the D-ribose 5-phosphate site; that span reads GS.

This sequence belongs to the PdxS/SNZ family. In the presence of PdxT, forms a dodecamer of heterodimers.

The catalysed reaction is aldehydo-D-ribose 5-phosphate + D-glyceraldehyde 3-phosphate + L-glutamine = pyridoxal 5'-phosphate + L-glutamate + phosphate + 3 H2O + H(+). It functions in the pathway cofactor biosynthesis; pyridoxal 5'-phosphate biosynthesis. Its function is as follows. Catalyzes the formation of pyridoxal 5'-phosphate from ribose 5-phosphate (RBP), glyceraldehyde 3-phosphate (G3P) and ammonia. The ammonia is provided by the PdxT subunit. Can also use ribulose 5-phosphate and dihydroxyacetone phosphate as substrates, resulting from enzyme-catalyzed isomerization of RBP and G3P, respectively. The sequence is that of Pyridoxal 5'-phosphate synthase subunit PdxS from Macrococcus caseolyticus (strain JCSC5402) (Macrococcoides caseolyticum).